The primary structure comprises 277 residues: Phosphate import ATP-binding protein PstB (277 aa).

One can recognise an ABC transporter domain in the interval 31 to 272 (IEVPGLSLFY…PAKKQTEDYI (242 aa)). An ATP-binding site is contributed by 63 to 70 (GPSGCGKS).

It belongs to the ABC transporter superfamily. Phosphate importer (TC 3.A.1.7) family. In terms of assembly, the complex is composed of two ATP-binding proteins (PstB), two transmembrane proteins (PstC and PstA) and a solute-binding protein (PstS).

It is found in the cell inner membrane. The enzyme catalyses phosphate(out) + ATP + H2O = ADP + 2 phosphate(in) + H(+). In terms of biological role, part of the ABC transporter complex PstSACB involved in phosphate import. Responsible for energy coupling to the transport system. The polypeptide is Phosphate import ATP-binding protein PstB (Pseudomonas putida (Arthrobacter siderocapsulatus)).